The following is a 1437-amino-acid chain: FYVE and coiled-coil domain-containing protein 1 (1437 aa).

Alanine 2 bears the N-acetylalanine mark. Residues 4–30 are a coiled coil; that stretch reads SSTETQLQRIIRDLQDAATELSHEFKE. The RUN domain maps to 36-169; it reads TDDSTSLHKF…VQFDLAPRGY (134 aa). Serine 196 bears the Phosphoserine mark. Coiled coils occupy residues 223–270, 305–846, and 873–1110; these read SLNN…VSRQ, SQAT…SEGA, and ALTA…KDAL. Threonine 372 bears the Phosphothreonine mark. Serine 837 carries the phosphoserine modification. An FYVE-type zinc finger spans residues 1132 to 1190; that stretch reads DMEVNHCHDCKREFSWIVRRHHCRICGRIFCYYCCNNYVVTKPSGKKERCCRACFQKFG. Zn(2+)-binding residues include cysteine 1138, cysteine 1141, cysteine 1154, cysteine 1157, cysteine 1162, cysteine 1165, cysteine 1182, and cysteine 1185. Disordered stretches follow at residues 1191 to 1227 and 1253 to 1289; these read EGSGSNDSSGSGTSQGEPSPMVSPAEASPQSIGSQGI and SGSSLPETPTETDSMDPNTAEQDTTSNSLTPEDTEDV. Residues 1194–1206 show a composition bias toward low complexity; that stretch reads GSNDSSGSGTSQG. Polar residues-rich tracts occupy residues 1218–1227 and 1253–1283; these read SPQSIGSQGI and SGSSLPETPTETDSMDPNTAEQDTTSNSLTP. One can recognise a GOLD domain in the interval 1296–1425; that stretch reads EICLLKSGEL…SKKVLYHLTV (130 aa).

In terms of assembly, can form homodimers. Interacts (via C-terminus) with MAP1LC3B. Interacts with RAB7A; the interaction with RAB7A induces FYCO1 recruitment to late endosomal/lysosomal compartments. As to expression, expressed in heart and testis. Expressed in the eye lens.

The protein resides in the cytoplasmic vesicle. It is found in the autophagosome. It localises to the endosome. Its subcellular location is the lysosome. May mediate microtubule plus end-directed vesicle transport. In Mus musculus (Mouse), this protein is FYVE and coiled-coil domain-containing protein 1 (Fyco1).